The sequence spans 126 residues: Holo-[acyl-carrier-protein] synthase (126 aa).

Mg(2+) contacts are provided by Asp-9 and Glu-58.

The protein belongs to the P-Pant transferase superfamily. AcpS family. Mg(2+) serves as cofactor.

Its subcellular location is the cytoplasm. It catalyses the reaction apo-[ACP] + CoA = holo-[ACP] + adenosine 3',5'-bisphosphate + H(+). Transfers the 4'-phosphopantetheine moiety from coenzyme A to a Ser of acyl-carrier-protein. The chain is Holo-[acyl-carrier-protein] synthase from Shewanella frigidimarina (strain NCIMB 400).